Here is an 877-residue protein sequence, read N- to C-terminus: Alanine--tRNA ligase (877 aa).

Residues histidine 565, histidine 569, cysteine 667, and histidine 671 each coordinate Zn(2+).

It belongs to the class-II aminoacyl-tRNA synthetase family. The cofactor is Zn(2+).

The protein localises to the cytoplasm. It catalyses the reaction tRNA(Ala) + L-alanine + ATP = L-alanyl-tRNA(Ala) + AMP + diphosphate. Functionally, catalyzes the attachment of alanine to tRNA(Ala) in a two-step reaction: alanine is first activated by ATP to form Ala-AMP and then transferred to the acceptor end of tRNA(Ala). Also edits incorrectly charged Ser-tRNA(Ala) and Gly-tRNA(Ala) via its editing domain. The chain is Alanine--tRNA ligase from Acidithiobacillus ferridurans.